The sequence spans 360 residues: Protein Wnt-2 (360 aa).

Residues 1–25 (MNACLVGIWLWLPLLFTWLSPEVSS) form the signal peptide. 11 disulfide bridges follow: C76/C87, C127/C135, C137/C157, C206/C220, C208/C215, C278/C309, C294/C304, C308/C348, C324/C339, C326/C336, and C331/C332. A lipid anchor (O-palmitoleoyl serine; by PORCN) is attached at S212. The N-linked (GlcNAc...) asparagine glycan is linked to N295.

This sequence belongs to the Wnt family. Post-translationally, palmitoleoylation is required for efficient binding to frizzled receptors. Depalmitoleoylation leads to Wnt signaling pathway inhibition.

Its subcellular location is the secreted. It is found in the extracellular space. The protein resides in the extracellular matrix. Ligand for members of the frizzled family of seven transmembrane receptors. Probable developmental protein. May be a signaling molecule which affects the development of discrete regions of tissues. Is likely to signal over only few cell diameters. The chain is Protein Wnt-2 (WNT2) from Muntiacus muntjak (Barking deer).